We begin with the raw amino-acid sequence, 186 residues long: Guanylate kinase (186 aa).

The Guanylate kinase-like domain occupies 5 to 183 (GNLTVLTGPS…AFKEIEGFMG (179 aa)). 12–19 (GPSGVGKG) contacts ATP.

This sequence belongs to the guanylate kinase family.

Its subcellular location is the cytoplasm. It carries out the reaction GMP + ATP = GDP + ADP. In terms of biological role, essential for recycling GMP and indirectly, cGMP. The sequence is that of Guanylate kinase from Prochlorococcus marinus (strain NATL2A).